Consider the following 2009-residue polypeptide: Sodium channel protein type 1 subunit alpha (2009 aa).

Residues 1 to 128 (MEQTVLVPPG…KIAIKILVHS (128 aa)) lie on the Cytoplasmic side of the membrane. A compositionally biased stretch (basic and acidic residues) spans 28–48 (RIAEEKAKNPKPDKKDDDENG). Residues 28 to 60 (RIAEEKAKNPKPDKKDDDENGPKPNSDLEAGKN) are disordered. The I repeat unit spans residues 110-454 (ILTPFNPLRK…QQMIEQLKKQ (345 aa)). A helical transmembrane segment spans residues 129–146 (LFSMLIMCTILTNCVFMT). Residues 147-152 (MSNPPD) lie on the Extracellular side of the membrane. The helical transmembrane segment at 153–177 (WTKNVEYTFTGIYTFESLIKIIARG) threads the bilayer. At 178-188 (FCLEDFTFLRD) the chain is on the cytoplasmic side. The chain crosses the membrane as a helical span at residues 189-205 (PWNWLDFTVITFAYVTE). At 206–213 (FVDLGNVS) the chain is on the extracellular side. The N-linked (GlcNAc...) asparagine glycan is linked to Asn-211. A helical membrane pass occupies residues 214 to 235 (ALRTFRVLRALKTISVIPGLKT). At 236–245 (IVGALIQSVK) the chain is on the cytoplasmic side. Residues 246-269 (KLSDVMILTVFCLSVFALIGLQLF) form a helical membrane-spanning segment. Residues 270 to 369 (MGNLRNKCIQ…YGYTSFDTFS (100 aa)) lie on the Extracellular side of the membrane. Cystine bridges form between Cys-277-Cys-345 and Cys-336-Cys-351. Asn-284, Asn-295, Asn-301, Asn-306, and Asn-338 each carry an N-linked (GlcNAc...) asparagine glycan. The pore-forming intramembrane region spans 370–384 (WAFLSLFRLMTQDFW). Over 385–397 (ENLYQLTLRAAGK) the chain is Extracellular. Residues 398-423 (TYMIFFVLVIFLGSFYLINLILAVVA) form a helical membrane-spanning segment. The Cytoplasmic segment spans residues 424 to 768 (MAYEEQNQAT…HVVNLVVMDP (345 aa)). The tract at residues 455–529 (QEAAQQAATA…FQKSESEDSI (75 aa)) is disordered. Low complexity predominate over residues 456-466 (EAAQQAATATA). The residue at position 470 (Ser-470) is a Phosphoserine. A compositionally biased stretch (low complexity) spans 479–492 (LSDSSSEASKLSSK). Basic residues predominate over residues 495–506 (KERRNRRKKRKQ). Basic and acidic residues predominate over residues 520 to 529 (FQKSESEDSI). Phosphoserine occurs at positions 523, 525, 550, 551, 607, and 730. The tract at residues 584 to 627 (VGSENDFADDEHSTFEDNESRRDSLFVPRRHGERRNSNLSQTSR) is disordered. Residues 593 to 607 (DEHSTFEDNESRRDS) are compositionally biased toward basic and acidic residues. One copy of the II repeat lies at 750 to 1022 (CSPYWLKVKH…QIAVDRMHKG (273 aa)). A helical transmembrane segment spans residues 769-787 (FVDLAITICIVLNTLFMAM). The Extracellular segment spans residues 788 to 797 (EHYPMTDHFN). Residues 798–820 (NVLTVGNLVFTGIFTAEMFLKII) form a helical membrane-spanning segment. Topologically, residues 821-830 (AMDPYYYFQE) are cytoplasmic. The helical transmembrane segment at 831–849 (GWNIFDGFIVTLSLVELGL) threads the bilayer. At 850-854 (ANVEG) the chain is on the extracellular side. A helical membrane pass occupies residues 855–874 (LSVLRSFRLLRVFKLAKSWP). The Cytoplasmic segment spans residues 875–891 (TLNMLIKIIGNSVGALG). The chain crosses the membrane as a helical span at residues 892–912 (NLTLVLAIIVFIFAVVGMQLF). Over 913-938 (GKSYKDCVCKIASDCQLPRWHMNDFF) the chain is Extracellular. The cysteines at positions 921 and 927 are disulfide-linked. Residues 939–952 (HSFLIVFRVLCGEW) constitute an intramembrane region (pore-forming). Topologically, residues 953–965 (IETMWDCMEVAGQ) are extracellular. A disulfide bridge links Cys-959 with Cys-968. The helical transmembrane segment at 966–992 (AMCLTVFMMVMVIGNLVVLNLFLALLL) threads the bilayer. At 993 to 1218 (SSFSADNLAA…RTCFRIVEHN (226 aa)) the chain is on the cytoplasmic side. The tract at residues 1129 to 1163 (TEDFSSESDLEESKEKLNESSSSSEGSTVDIGAPV) is disordered. The stretch at 1200 to 1514 (RGKQWWNLRR…KKYYNAMKKL (315 aa)) is one III repeat. The helical transmembrane segment at 1219-1237 (WFETFIVFMILLSSGALAF) threads the bilayer. The Extracellular segment spans residues 1238–1250 (EDIYIDQRKTIKT). A helical transmembrane segment spans residues 1251–1276 (MLEYADKVFTYIFILEMLLKWVAYGY). The Cytoplasmic segment spans residues 1277–1278 (QT). Residues 1279–1304 (YFTNAWCWLDFLIVDVSLVSLTANAL) traverse the membrane as a helical segment. Residues 1305–1313 (GYSELGAIK) lie on the Extracellular side of the membrane. Residues 1314-1332 (SLRTLRALRPLRALSRFEG) traverse the membrane as a helical segment. The Cytoplasmic segment spans residues 1333–1345 (MRVVVNALLGAIP). The chain crosses the membrane as a helical span at residues 1346-1369 (SIMNVLLVCLIFWLIFSIMGVNLF). Residues 1370–1415 (AGKFYHCINTTTGDRFDIEDVNNHTDCLKLIERNETARWKNVKVNF) lie on the Extracellular side of the membrane. Residues Cys-1376 and Cys-1396 are joined by a disulfide bond. N-linked (GlcNAc...) asparagine glycans are attached at residues Asn-1378, Asn-1392, and Asn-1403. Residues 1416–1433 (DNVGFGYLSLLQVATFKG) constitute an intramembrane region (pore-forming). At 1434-1457 (WMDIMYAAVDSRNVELQPKYEESL) the chain is on the extracellular side. Residues 1458–1483 (YMYLYFVIFIIFGSFFTLNLFIGVII) form a helical membrane-spanning segment. The Cytoplasmic portion of the chain corresponds to 1484–1541 (DNFNQQKKKFGGQDIFMTEEQKKYYNAMKKLGSKKPQKPIPRPGNKFQGMVFDFVTRQ). Ser-1516 carries the phosphoserine; by PKC modification. The stretch at 1523 to 1821 (IPRPGNKFQG…WEKFDPDATQ (299 aa)) is one IV repeat. Residues 1542–1560 (VFDISIMILICLNMVTMMV) form a helical membrane-spanning segment. Topologically, residues 1561 to 1571 (ETDDQSEYVTT) are extracellular. The tract at residues 1561–1571 (ETDDQSEYVTT) is S1-S2 loop of repeat IV. A helical membrane pass occupies residues 1572 to 1593 (ILSRINLVFIVLFTGECVLKLI). Over 1594–1601 (SLRHYYFT) the chain is Cytoplasmic. A helical transmembrane segment spans residues 1602–1623 (IGWNIFDFVVVILSIVGMFLAE). The interval 1619–1636 (MFLAELIEKYFVSPTLFR) is S3b-S4 loop of repeat IV. Residues 1624 to 1636 (LIEKYFVSPTLFR) are Extracellular-facing. The helical transmembrane segment at 1637-1655 (VIRLARIGRILRLIKGAKG) threads the bilayer. Residues 1656 to 1665 (IRTLLFALMM) lie on the Cytoplasmic side of the membrane. Residues 1666–1688 (SLPALFNIGLLLFLVMFIYAIFG) form a helical membrane-spanning segment. Residues 1689–1711 (MSNFAYVKREVGIDDMFNFETFG) lie on the Extracellular side of the membrane. The segment at residues 1712-1726 (NSMICLFQITTSAGW) is an intramembrane region (pore-forming). Topologically, residues 1727–1759 (DGLLAPILNSKPPDCDPNKVNPGSSVKGDCGNP) are extracellular. Residues Cys-1741 and Cys-1756 are joined by a disulfide bond. A helical transmembrane segment spans residues 1760-1788 (SVGIFFFVSYIIISFLVVVNMYIAVILEN). Over 1789–2009 (FSVATEESAE…EGKDEKAKGK (221 aa)) the chain is Cytoplasmic. The 30-residue stretch at 1915-1944 (EEVSAVIIQRAYRRHLLKRTVKQASFTYNK) folds into the IQ domain. The disordered stretch occupies residues 1986-2009 (YDRVTKPIVEKHEQEGKDEKAKGK). Over residues 1988–2009 (RVTKPIVEKHEQEGKDEKAKGK) the composition is skewed to basic and acidic residues.

Belongs to the sodium channel (TC 1.A.1.10) family. Nav1.1/SCN1A subfamily. In terms of assembly, the Nav1.1 voltage-gated sodium channel consists of an ion-conducting alpha subunit SCN1A which is functional on its own regulated by one or more beta-1 (SCN1B), beta-2 (SCN2B), beta-3 (SCN3B) and beta-4 (SCN4B) subunits. SCN1B and SCN3B are non-covalently associated with SCN1A. SCN2B and SCN4B are disulfide-linked to SCN1A. SCN1B regulates both the expression at the plasma membrane and the voltage dependence of Nav1.1 inactivation. SCN3B and SCN4B reduce Nav1.1 conductance. Probably interacts with TMEM233; modulates the gating properties of NaV1.1. Interacts with FGF13; regulates the steady-state inactivation of Nav.1.1. Phosphorylation at Ser-1516 by PKC in a highly conserved cytoplasmic loop slows inactivation of the sodium channel and reduces peak sodium currents.

The protein localises to the cell membrane. It carries out the reaction Na(+)(in) = Na(+)(out). Activated by the spider toxins Hm1a and Hm1b (H.maculata, AC P60992 and AC P0DOC5) eliciting acute pain and mechanical allodynia. Inhibited by the conotoxin GVIIJ. Inhibited by the spider beta/delta-theraphotoxin-Pre1a. Functionally, pore-forming subunit of Nav1.1, a voltage-gated sodium (Nav) channel that directly mediates the depolarizing phase of action potentials in excitable membranes. Navs, also called VGSCs (voltage-gated sodium channels) or VDSCs (voltage-dependent sodium channels), operate by switching between closed and open conformations depending on the voltage difference across the membrane. In the open conformation they allow Na(+) ions to selectively pass through the pore, along their electrochemical gradient. The influx of Na(+) ions provokes membrane depolarization, initiating the propagation of electrical signals throughout cells and tissues. By regulating the excitability of neurons, ensures that they respond appropriately to synaptic inputs, maintaining the balance between excitation and inhibition in brain neural circuits. Nav1.1 plays a role in controlling the excitability and action potential propagation from somatosensory neurons, thereby contributing to the sensory perception of mechanically-induced pain. This chain is Sodium channel protein type 1 subunit alpha, found in Homo sapiens (Human).